The sequence spans 208 residues: Ribosomal RNA large subunit methyltransferase E (208 aa).

S-adenosyl-L-methionine contacts are provided by glycine 62, tryptophan 64, aspartate 82, aspartate 98, and aspartate 123. Lysine 163 serves as the catalytic Proton acceptor.

The protein belongs to the class I-like SAM-binding methyltransferase superfamily. RNA methyltransferase RlmE family.

The protein resides in the cytoplasm. It catalyses the reaction uridine(2552) in 23S rRNA + S-adenosyl-L-methionine = 2'-O-methyluridine(2552) in 23S rRNA + S-adenosyl-L-homocysteine + H(+). Specifically methylates the uridine in position 2552 of 23S rRNA at the 2'-O position of the ribose in the fully assembled 50S ribosomal subunit. This chain is Ribosomal RNA large subunit methyltransferase E, found in Actinobacillus succinogenes (strain ATCC 55618 / DSM 22257 / CCUG 43843 / 130Z).